Consider the following 476-residue polypeptide: Glycogen synthase (476 aa).

Lys15 is an ADP-alpha-D-glucose binding site.

Belongs to the glycosyltransferase 1 family. Bacterial/plant glycogen synthase subfamily.

The enzyme catalyses [(1-&gt;4)-alpha-D-glucosyl](n) + ADP-alpha-D-glucose = [(1-&gt;4)-alpha-D-glucosyl](n+1) + ADP + H(+). The protein operates within glycan biosynthesis; glycogen biosynthesis. In terms of biological role, synthesizes alpha-1,4-glucan chains using ADP-glucose. The chain is Glycogen synthase from Haemophilus influenzae (strain PittEE).